The sequence spans 371 residues: Gustatory receptor-like 65a (371 aa).

Residues 1-13 are Cytoplasmic-facing; that stretch reads MREVNLLNRFTRQ. A helical membrane pass occupies residues 14 to 34; that stretch reads FLFLIVLVTQICGVATFVYNS. At 35–42 the chain is on the extracellular side; the sequence is KAQCFRQS. The chain crosses the membrane as a helical span at residues 43-63; it reads GFLRFYSSLVLIFLALFLIVT. Residues 64–72 are Cytoplasmic-facing; it reads TSKMFHNLQ. The chain crosses the membrane as a helical span at residues 73–93; that stretch reads AVWPYVVGSVIILVVRIHGLL. The Extracellular portion of the chain corresponds to 94–126; sequence ESAEIVELLNQMLRIMRQVNLMARHPNLFRLKH. The helical transmembrane segment at 127–147 threads the bilayer; sequence LLLLLLALQNLLRSLNTIVGI. The Cytoplasmic segment spans residues 148–161; the sequence is SNHSAEAYDSFLNS. A helical membrane pass occupies residues 162–182; it reads VILLIILAVLLSFLLQITINI. The Extracellular segment spans residues 183-251; that stretch reads CLFVVLIATY…FHITVRIIRH (69 aa). The helical transmembrane segment at 252-272 threads the bilayer; it reads FRFHWLCAIIYGLLPFFSLTA. The Cytoplasmic portion of the chain corresponds to 273-277; the sequence is KDQNG. A helical transmembrane segment spans residues 278 to 298; sequence FNFLIISALNIIFQWTIFAIL. Residues 299–371 lie on the Extracellular side of the membrane; the sequence is SRESRITRSL…FVNRLEYLHI (73 aa).

Its subcellular location is the cell membrane. The polypeptide is Gustatory receptor-like 65a (Drosophila melanogaster (Fruit fly)).